The sequence spans 205 residues: Holliday junction branch migration complex subunit RuvA (205 aa).

Residues 1 to 64 (MIGRLRGIIL…EDAQLLFGFN (64 aa)) form a domain I region. The domain II stretch occupies residues 65–142 (DKQERALFRE…KGLSGDLFNP (78 aa)). Residues 143 to 156 (VSDIPLASPASAES) are flexible linker. Residues 157–205 (RASDPEAEAAAALVALGYKPQEASRMISKIARPEADCETLIRDALRAAL) are domain III.

Belongs to the RuvA family. In terms of assembly, homotetramer. Forms an RuvA(8)-RuvB(12)-Holliday junction (HJ) complex. HJ DNA is sandwiched between 2 RuvA tetramers; dsDNA enters through RuvA and exits via RuvB. An RuvB hexamer assembles on each DNA strand where it exits the tetramer. Each RuvB hexamer is contacted by two RuvA subunits (via domain III) on 2 adjacent RuvB subunits; this complex drives branch migration. In the full resolvosome a probable DNA-RuvA(4)-RuvB(12)-RuvC(2) complex forms which resolves the HJ.

Its subcellular location is the cytoplasm. Its function is as follows. The RuvA-RuvB-RuvC complex processes Holliday junction (HJ) DNA during genetic recombination and DNA repair, while the RuvA-RuvB complex plays an important role in the rescue of blocked DNA replication forks via replication fork reversal (RFR). RuvA specifically binds to HJ cruciform DNA, conferring on it an open structure. The RuvB hexamer acts as an ATP-dependent pump, pulling dsDNA into and through the RuvAB complex. HJ branch migration allows RuvC to scan DNA until it finds its consensus sequence, where it cleaves and resolves the cruciform DNA. The sequence is that of Holliday junction branch migration complex subunit RuvA from Pectobacterium carotovorum subsp. carotovorum (strain PC1).